Reading from the N-terminus, the 65-residue chain is Large ribosomal subunit protein bL35 (65 aa).

It belongs to the bacterial ribosomal protein bL35 family.

This Parasynechococcus marenigrum (strain WH8102) protein is Large ribosomal subunit protein bL35.